The following is a 187-amino-acid chain: Dihydrofolate reductase type A10 (187 aa).

A DHFR domain is found at 2 to 174; sequence NISLIFANEL…YSLSIDKFVR (173 aa).

It belongs to the dihydrofolate reductase family. Homodimer.

The enzyme catalyses (6S)-5,6,7,8-tetrahydrofolate + NADP(+) = 7,8-dihydrofolate + NADPH + H(+). It functions in the pathway cofactor biosynthesis; tetrahydrofolate biosynthesis; 5,6,7,8-tetrahydrofolate from 7,8-dihydrofolate: step 1/1. Functionally, key enzyme in folate metabolism. Catalyzes an essential reaction for de novo glycine and purine synthesis, and for DNA precursor synthesis. The sequence is that of Dihydrofolate reductase type A10 (dfrA10) from Escherichia coli.